The primary structure comprises 492 residues: Glutamyl-tRNA(Gln) amidotransferase subunit A, mitochondrial (492 aa).

Active-site charge relay system residues include K78 and S159. Residue S183 is the Acyl-ester intermediate of the active site.

Belongs to the amidase family. GatA subfamily. In terms of assembly, subunit of the heterotrimeric GatCAB amidotransferase (AdT) complex, composed of A, B and C subunits.

The protein localises to the mitochondrion. The enzyme catalyses L-glutamyl-tRNA(Gln) + L-glutamine + ATP + H2O = L-glutaminyl-tRNA(Gln) + L-glutamate + ADP + phosphate + H(+). Functionally, allows the formation of correctly charged Gln-tRNA(Gln) through the transamidation of misacylated Glu-tRNA(Gln) in the mitochondria. The reaction takes place in the presence of glutamine and ATP through an activated gamma-phospho-Glu-tRNA(Gln). The sequence is that of Glutamyl-tRNA(Gln) amidotransferase subunit A, mitochondrial from Anopheles gambiae (African malaria mosquito).